Reading from the N-terminus, the 289-residue chain is MVVVNGREPDSRHSDGAMSSSEAEDDFLEPATPTATQAGHGLPLLPQEFPEVVPLNIGGAHFTTRLSTLRRYEDTMLAAMFSGRHYIPTDSEGRYFIDRDGTHFGDVLNFLRSGDLPPREHVRAVHKEAQYYAIGPLLEQLENMQPLKGEKVRQAFLGLMPYYKDHLERIVEIARLRAVQRKARFAKLKVCVFKEEMPITPYECPLLNSLRFERSESDGQLFEHHCEVDVSFGPWEAVADVYDLLHCLVTDLSAQGLTVDHQCIGVCDKHLVNHYYCKRPIYEFKITWW.

The tract at residues methionine 1–leucine 42 is disordered. The region spanning valine 53–leucine 141 is the BTB domain.

In terms of assembly, interacts with CUL3.

Its subcellular location is the cell membrane. The protein resides in the cytoplasm. It is found in the cytosol. Its function is as follows. May be involved in the control of excitability of cortical neurons. The chain is BTB/POZ domain-containing protein KCTD7 (Kctd7) from Rattus norvegicus (Rat).